A 78-amino-acid chain; its full sequence is Acyl carrier protein (78 aa).

Residues 2 to 77 (SSIEERVKKI…QATSYVEANL (76 aa)) form the Carrier domain. O-(pantetheine 4'-phosphoryl)serine is present on Ser37.

It belongs to the acyl carrier protein (ACP) family. 4'-phosphopantetheine is transferred from CoA to a specific serine of apo-ACP by AcpS. This modification is essential for activity because fatty acids are bound in thioester linkage to the sulfhydryl of the prosthetic group.

The protein localises to the cytoplasm. It functions in the pathway lipid metabolism; fatty acid biosynthesis. In terms of biological role, carrier of the growing fatty acid chain in fatty acid biosynthesis. The protein is Acyl carrier protein of Hydrogenovibrio crunogenus (strain DSM 25203 / XCL-2) (Thiomicrospira crunogena).